A 31-amino-acid chain; its full sequence is Cytochrome b6-f complex subunit 6 (31 aa).

Residues 4-26 (LTSYFGFLLAALTITSALFIGLN) form a helical membrane-spanning segment.

The protein belongs to the PetL family. The 4 large subunits of the cytochrome b6-f complex are cytochrome b6, subunit IV (17 kDa polypeptide, PetD), cytochrome f and the Rieske protein, while the 4 small subunits are PetG, PetL, PetM and PetN. The complex functions as a dimer.

The protein resides in the plastid. It localises to the chloroplast thylakoid membrane. Its function is as follows. Component of the cytochrome b6-f complex, which mediates electron transfer between photosystem II (PSII) and photosystem I (PSI), cyclic electron flow around PSI, and state transitions. PetL is important for photoautotrophic growth as well as for electron transfer efficiency and stability of the cytochrome b6-f complex. In Amaranthus caudatus (Love-lies-bleeding), this protein is Cytochrome b6-f complex subunit 6.